A 716-amino-acid polypeptide reads, in one-letter code: Polyribonucleotide nucleotidyltransferase (716 aa).

Mg(2+) is bound by residues aspartate 495 and aspartate 501. Positions 562-621 constitute a KH domain; sequence PRLFRIQINPEQIGLVIGPGGKTIRSITEQTGAKIDIEDTGAVTISAVDADSALRAKSII. One can recognise an S1 motif domain in the interval 631–699; it reads GDVYIGKVTR…QKGRVNLTRK (69 aa).

It belongs to the polyribonucleotide nucleotidyltransferase family. Mg(2+) is required as a cofactor.

It is found in the cytoplasm. It carries out the reaction RNA(n+1) + phosphate = RNA(n) + a ribonucleoside 5'-diphosphate. Involved in mRNA degradation. Catalyzes the phosphorolysis of single-stranded polyribonucleotides processively in the 3'- to 5'-direction. This Synechococcus sp. (strain ATCC 27144 / PCC 6301 / SAUG 1402/1) (Anacystis nidulans) protein is Polyribonucleotide nucleotidyltransferase.